The chain runs to 289 residues: 4-hydroxy-tetrahydrodipicolinate synthase (289 aa).

A pyruvate-binding site is contributed by threonine 44. Tyrosine 130 (proton donor/acceptor) is an active-site residue. Lysine 158 functions as the Schiff-base intermediate with substrate in the catalytic mechanism. Isoleucine 200 contacts pyruvate.

Belongs to the DapA family. As to quaternary structure, homotetramer; dimer of dimers.

It localises to the cytoplasm. The enzyme catalyses L-aspartate 4-semialdehyde + pyruvate = (2S,4S)-4-hydroxy-2,3,4,5-tetrahydrodipicolinate + H2O + H(+). The protein operates within amino-acid biosynthesis; L-lysine biosynthesis via DAP pathway; (S)-tetrahydrodipicolinate from L-aspartate: step 3/4. In terms of biological role, catalyzes the condensation of (S)-aspartate-beta-semialdehyde [(S)-ASA] and pyruvate to 4-hydroxy-tetrahydrodipicolinate (HTPA). This Archaeoglobus fulgidus (strain ATCC 49558 / DSM 4304 / JCM 9628 / NBRC 100126 / VC-16) protein is 4-hydroxy-tetrahydrodipicolinate synthase.